The chain runs to 312 residues: Small ribosomal subunit protein RACK1 (312 aa).

WD repeat units follow at residues 9 to 42 (GHRGWVTSLACPQQAGSYIKVVSTSRDGTVISWK), 63 to 93 (GHTGFVSCVSLAHATDYALTASWDRSIRMWD), 105 to 135 (KHTKDVLAVAFSPDDRLIVSAGRDNVIRVWN), 148 to 180 (GHEDWVSSICFSPSLEHPIVVSGSWDNTIKVWN), 192 to 222 (GHSNYVSTVTVSPDGSLCASGGKDGAALLWD), 233 to 262 (NVESPINQIGFSPNRFWMCVATERSLSVYD), and 279 to 307 (PSECISIAWSADGNTLYSGHKDNLIRVWS).

It belongs to the WD repeat G protein beta family. Ribosomal protein RACK1 subfamily.

The protein is Small ribosomal subunit protein RACK1 of Leishmania major.